The chain runs to 364 residues: MPKPAIKTAAKPATSSAGKRGKPNTPKSVAKPKTAKPKTASKPKVKPGEKKRLHPRNLHINGYDFPALMASYPKLKAFVRPTPYGALSIDFADPLAVKTLNAALLLHHYGLAFWDIPKGALCPPIPGRVDYLHYLADLLFEGGKVKRAAAIRALDIGTGANGVYAILGHQVYDWQFVASDINPQSLTNVQRIIDNNPSLQGHLSLRRQQDDKAVFKGIIQASDRFELTLCNPPFHGSLKEASEGSLRKVRNLQLNRGEQPKATSATLNFGGQAAELWCQGGEKQFLATMIRESQAFAEQCLWFTSLVSKQENLKPCYQALEKLGVDTVKTIEMQQGNKFTRVLAWSFHSQAKRLQWRNQIVSGT.

The segment covering 1–17 (MPKPAIKTAAKPATSSA) has biased composition (low complexity). The segment at 1–53 (MPKPAIKTAAKPATSSAGKRGKPNTPKSVAKPKTAKPKTASKPKVKPGEKKRL) is disordered. Residues 33–53 (KTAKPKTASKPKVKPGEKKRL) are compositionally biased toward basic residues.

It belongs to the methyltransferase superfamily. METTL16/RlmF family.

Its subcellular location is the cytoplasm. The catalysed reaction is adenosine(1618) in 23S rRNA + S-adenosyl-L-methionine = N(6)-methyladenosine(1618) in 23S rRNA + S-adenosyl-L-homocysteine + H(+). Specifically methylates the adenine in position 1618 of 23S rRNA. The sequence is that of Ribosomal RNA large subunit methyltransferase F from Shewanella sp. (strain MR-7).